A 334-amino-acid chain; its full sequence is D-alanine--D-alanine ligase (334 aa).

The 197-residue stretch at 110 to 306 (KHVLKSLGID…FDHVVDLIVQ (197 aa)) folds into the ATP-grasp domain. Residue 138–190 (LPYPFVIKPVRGGSTIGVHAIFSKSEYLDLSAHADTLEDRMIVEEYVSGQEVQ) participates in ATP binding. D258, E272, and N274 together coordinate Mg(2+).

The protein belongs to the D-alanine--D-alanine ligase family. The cofactor is Mg(2+). Mn(2+) is required as a cofactor.

The protein resides in the cytoplasm. It carries out the reaction 2 D-alanine + ATP = D-alanyl-D-alanine + ADP + phosphate + H(+). The protein operates within cell wall biogenesis; peptidoglycan biosynthesis. Its function is as follows. Cell wall formation. The polypeptide is D-alanine--D-alanine ligase (Anaplasma marginale (strain Florida)).